Here is a 1280-residue protein sequence, read N- to C-terminus: MQLFPLLFSLLLTSTPGSWARNVRRQSDTWGTWGEWSPCSRTCGGGISFRERPCYSQRRDGGTSCVGPARSHRTCHTESCPDGVRDFRAEQCAEFDGTDFQGRRYRWLPYYAAPNKCELNCIPKGQNFYYKHKDAVVDGTPCEPGQRDICVDGVCRVVGCDHKLDSIKQEDKCLQCGGDGSSCYPVTGTFDGNDLSRGYNQIFIIPAGATSIRIEEAAASRNFLAVKSIRGEYYLNGHWTIEAAQALPVASTVLQYERGVEGDLAPERLQARGPTSEPLVIELLSQESNPGVHYEYYLPANDPGRGFSWSHGSWGDCSAECGGGHQSRLVFCTIDNEAYPDHMCQHQPRPTHRRSCNTQPCPKTKRWKVGPWTPCSVSCGGGVQSRSVYCISSDGTGGQEAAEETQCAGLVGKPPTTQACNLQHCAVWSVEPWGECSVTCGTGIRKRSVTCRGDEGSPVHAAACLLKDQPTLTEPCVQEACPVFRGQAWHVGSWSLCSKSCGSGIRRRQVVCTIGPPGRCVDLQSSKPAEMEACNRQPCHLPQEVPSIQDPRTRSSDPRMLSGPRVSPVSDGREQQWAPLERPRAQSNPREGQDPNLSSAGRAPTLQRPPHQPPLRPSSGPRDCRHSPHGCCPDGHTPSLGPQWQGCPLAGASCLQSRYGCCPDGVSAAEGPQQAGCTRSHGSDNTGNRPGSRAVASKNPKIHQPQAHEGEPSECRSSRFGCCYDNVASAAGPLGEGCVGQPSYAYPVRCLLPSAQGSCGDWAARWYFVASVGRCNRFWYGGCHGNANNFASEQECMNTCRGQHGPRRPEAGAAGHRAHVDGGQRGPGGQQEPDWHRAGATIPRLPSPSGSPWRREQEPAPGEPPHIPAYGNRPGGQEIRPRVPGLDREARPAVPPTHSPSYRIRLAGSEPSLVQAAPGQAVQLFCPGNIPSEFQAGWQKEGRPISSNRYQLQADGSLIISRLRPEDAGIYSCGSHRPGHEPQEIQLRVTGGDMAVFPEGQPRHFPEPRNPDLGHGPPHRGTGAEAGGHRVLSPSHPRPATRLRLDRTQPGVVDASPGQRIRLTCRAEGFPVPTIEWQRDGQLVSSPRHQVQPDGSLVISRVDVEDGGYYSCVAFNGQDRDQRWVQLRVLRELTITGLPPAVTVAEGDTARLLCVVAGESVNIRWSRNGLPIQADGHRVHQSPDGTLLIHNLRPRDEGSYTCSAFRGSQAVSRSTEVKVALPAPAAQSRDLGKDCIDQPELANCALILQAQLCGNEYYSSFCCASCSRFQPNAQPVWQQG.

A signal peptide spans 1–20 (MQLFPLLFSLLLTSTPGSWA). 5 TSP type-1 domains span residues 27–81 (SDTW…ESCP), 305–362 (RGFS…QPCP), 363–422 (KTKR…ACNL), 424–482 (HCAV…EACP), and 485–540 (RGQA…QPCH). 3 disulfides stabilise this stretch: cysteine 39–cysteine 75, cysteine 43–cysteine 80, and cysteine 54–cysteine 65. Cystine bridges form between cysteine 425-cysteine 464, cysteine 436-cysteine 476, and cysteine 440-cysteine 481. Disordered stretches follow at residues 541-626 (LPQE…DCRH) and 672-715 (PQQA…PSEC). Residues 585–599 (AQSNPREGQDPNLSS) are compositionally biased toward polar residues. Positions 706 to 715 (QAHEGEPSEC) are enriched in basic and acidic residues. Intrachain disulfides connect cysteine 750–cysteine 800, cysteine 759–cysteine 783, and cysteine 775–cysteine 796. The 51-residue stretch at 750-800 (CLLPSAQGSCGDWAARWYFVASVGRCNRFWYGGCHGNANNFASEQECMNTC) folds into the BPTI/Kunitz inhibitor domain. The disordered stretch occupies residues 800 to 902 (CRGQHGPRRP…AVPPTHSPSY (103 aa)). The span at 879 to 891 (IRPRVPGLDREAR) shows a compositional bias: basic and acidic residues. Residues 900–990 (PSYRIRLAGS…EPQEIQLRVT (91 aa)) enclose the Ig-like C2-type 1 domain. Cysteine 926 and cysteine 973 are joined by a disulfide. A compositionally biased stretch (basic and acidic residues) spans 1002–1012 (PRHFPEPRNPD). Residues 1002 to 1042 (PRHFPEPRNPDLGHGPPHRGTGAEAGGHRVLSPSHPRPATR) are disordered. 2 consecutive Ig-like C2-type domains span residues 1039 to 1128 (PATR…VQLR) and 1133 to 1218 (LTIT…TEVK). Intrachain disulfides connect cysteine 1065–cysteine 1112 and cysteine 1154–cysteine 1202. The 40-residue stretch at 1231–1270 (LGKDCIDQPELANCALILQAQLCGNEYYSSFCCASCSRFQ) folds into the PLAC domain.

Belongs to the papilin family.

Its subcellular location is the secreted. This is Papilin (Papln) from Mus musculus (Mouse).